The following is a 520-amino-acid chain: Flavin-dependent halogenase radH (520 aa).

FAD-binding residues include Gly-14, Ala-17, and Glu-47. The chloride site is built by Ser-330 and Gly-331.

The protein belongs to the flavin-dependent halogenase family.

The protein operates within secondary metabolite biosynthesis. Non-heme halogenase; part of the gene cluster that mediates the biosynthesis of radicicol, a resorcylic acid lactone (RAL) that irreversibly inhibits the HSP90 molecular chaperone, an important target for cancer chemotherapy. The cluster encodes only two apparent post-PKS enzymes, a cytochrome P450 monooxygenase (radP) and a non-heme halogenase (radH) that introduce the epoxide and the chlorine, respectively. If this cluster includes all the genes required for radicicol biosynthesis, the remaining structural features of radicicol are presumably generated by the PKSs rads1 and rads2. The C-2' ketone could arise if the R-PKS rads1 and NR-PKS rads2 each carry out four iterations, in contrast to the five iteration-three iteration split for the hypothemycin PKSs. The origin of the cis 5',6' double bond is not known. The radicicol R-PKS rads1 ER domain may catalyze either double bond isomerization or reduction in the third iteration. The protein is Flavin-dependent halogenase radH of Floropilus chiversii (Chaetomium chiversii).